The primary structure comprises 337 residues: Putative long-chain-alcohol O-fatty-acyltransferase 10 (337 aa).

A run of 8 helical transmembrane segments spans residues 7–27, 38–58, 59–79, 82–102, 142–162, 228–248, 254–274, and 285–305; these read SFVK…YIPS, SVLP…FTIF, SSTT…LFAF, GPLL…CLPI, ILLL…LLTI, MGCM…YFYI, TLEV…EIAV, and MLLR…LFFG.

This sequence belongs to the wax synthase family.

The protein localises to the membrane. It carries out the reaction a long chain fatty alcohol + a fatty acyl-CoA = a wax ester + CoA. Catalyzes the final step in the synthesis of long-chain linear esters (waxes). The protein is Putative long-chain-alcohol O-fatty-acyltransferase 10 of Arabidopsis thaliana (Mouse-ear cress).